The primary structure comprises 511 residues: GMP synthase [glutamine-hydrolyzing] (511 aa).

The Glutamine amidotransferase type-1 domain maps to 5-195 (DILVLDFGSQ…AKYACNCESV (191 aa)). The active-site Nucleophile is the cysteine 82. Catalysis depends on residues histidine 169 and glutamate 171. A GMPS ATP-PPase domain is found at 196 to 386 (WNMGSFAKTQ…LGLSKEVVYR (191 aa)). 223-229 (SGGVDSS) contributes to the ATP binding site.

As to quaternary structure, homodimer.

It carries out the reaction XMP + L-glutamine + ATP + H2O = GMP + L-glutamate + AMP + diphosphate + 2 H(+). It functions in the pathway purine metabolism; GMP biosynthesis; GMP from XMP (L-Gln route): step 1/1. Functionally, catalyzes the synthesis of GMP from XMP. The protein is GMP synthase [glutamine-hydrolyzing] of Campylobacter jejuni (strain RM1221).